The chain runs to 32 residues: Cytochrome b6-f complex subunit 6 (32 aa).

A helical membrane pass occupies residues 6 to 26; it reads VFYIVFIALFFGIAVGIIFAI.

This sequence belongs to the PetL family. As to quaternary structure, the 4 large subunits of the cytochrome b6-f complex are cytochrome b6, subunit IV (17 kDa polypeptide, PetD), cytochrome f and the Rieske protein, while the 4 small subunits are PetG, PetL, PetM and PetN. The complex functions as a dimer.

Its subcellular location is the cellular thylakoid membrane. Component of the cytochrome b6-f complex, which mediates electron transfer between photosystem II (PSII) and photosystem I (PSI), cyclic electron flow around PSI, and state transitions. PetL is important for photoautotrophic growth as well as for electron transfer efficiency and stability of the cytochrome b6-f complex. The sequence is that of Cytochrome b6-f complex subunit 6 from Mastigocladus laminosus (Fischerella sp.).